We begin with the raw amino-acid sequence, 84 residues long: uncharacterized protein (84 aa).

Its function is as follows. This protein may be involved in virus assembly. This is an uncharacterized protein from Saccharolobus solfataricus (Sulfolobus solfataricus).